Reading from the N-terminus, the 661-residue chain is Potassium voltage-gated channel subfamily KQT member 1 (661 aa).

Disordered regions lie at residues 1 to 29 (MAAA…ESAG) and 42 to 88 (ESGP…SLDP). At 1–119 (MAAASTPPRA…YNFLERPTGW (119 aa)) the chain is on the cytoplasmic side. A Phosphoserine; by PKA modification is found at Ser27. The segment covering 54 to 85 (VSPPSAPEPAPPASPASPAPPAADQGPQPPVS) has biased composition (pro residues). Residues 120-141 (KCFAYHFTVFLIVLVCLIFSVL) traverse the membrane as a helical segment. The Extracellular portion of the chain corresponds to 142-152 (STIEQYATLAT). The helical transmembrane segment at 153-175 (GTLFWMEIVLVVFFGTEYVVRLW) threads the bilayer. Residues 176–191 (SAGCRSKYVGLWGRLR) lie on the Cytoplasmic side of the membrane. Residues 192–217 (FARKPISIIDLIVVVASMVVLCVGSK) traverse the membrane as a helical segment. The Extracellular portion of the chain corresponds to 218 to 225 (GQVFATSA). The helical; Voltage-sensor transmembrane segment at 226–241 (IRGIRFLQILRMLHVD) threads the bilayer. An interaction with KCNE3 region spans residues 237–245 (MLHVDRQGG). Residues 242–259 (RQGGTWRLLGSVVFIHRQ) lie on the Cytoplasmic side of the membrane. Gln243 is a binding site for a 1,2-diacyl-sn-glycero-3-phospho-(1D-myo-inositol-4,5-bisphosphate). Residues 260–282 (ELITTLYIGFLGLIFSSYFVYLA) traverse the membrane as a helical segment. Topologically, residues 283-298 (EKDAVNESGRVEFGSY) are extracellular. An N-linked (GlcNAc...) asparagine glycan is attached at Asn288. An intramembrane region (pore-forming) is located at residues 299–319 (ADALWWGVVTVTTIGYGDKVP). The Extracellular segment spans residues 320–321 (QT). A helical membrane pass occupies residues 322–347 (WVGKTIASCFSVFAISFFALPAGILG). Residues 348–661 (SGFALKVQQK…VPRRDPEEGS (314 aa)) lie on the Cytoplasmic side of the membrane. The interval 369–381 (AAASLIQTAWRCY) is interaction with CALM. Phosphoserine is present on residues Ser406 and Ser408. The tract at residues 514–528 (KVIRRMQYFVAKKKF) is interaction with CALM; calcium-dependent. The interaction with KCNE1 C-terminus stretch occupies residues 534–571 (PYDVRDVIEQYSQGHLNLMVRIKELQRRLDQSIGKPSL). The stretch at 584–620 (SNSIGARLNRVEDKVTQLDQRLVLIADMLQQLLALHQ) forms a coiled coil. The segment at 587 to 615 (IGARLNRVEDKVTQLDQRLVLIADMLQQL) is interaction with AKAP9. The interval 588-619 (GARLNRVEDKVTQLDQRLVLIADMLQQLLALH) is C-terminal assembly domain (tetramerization). A disordered region spans residues 624–661 (HGGAHPAQARDGDPADPELFLPTYEQLTVPRRDPEEGS).

This sequence belongs to the potassium channel family. KQT (TC 1.A.1.15) subfamily. Kv7.1/KCNQ1 sub-subfamily. As to quaternary structure, tetramer. Heterotetramer with KCNE1; targets to the membrane raft. Interacts (via C-terminus) with CALM; forms a heterooctameric structure (with 4:4 KCNQ1:CALM stoichiometry) in a calcium-independent manner. Interacts with AKAP9; targets protein kinase A (PKA) catalytic and regulatory subunits and protein phosphatase 1 (PP1) to the KCNQ1-KCNE1 complex, allowing PKA-mediated phosphorylation and increase of delayed rectifier potassium channel activity. Interacts with KCNE2; form a heterooligomer complex that targets to the membrane raft and leading to currents with an apparently instantaneous activation, a rapid deactivation process and a linear current-voltage relationship and decreases the amplitude of the outward current. Interacts with AP2M1; mediates estrogen-induced internalization via clathrin-coated vesicles. Interacts with NEDD4L; promotes internalization and decreases I(Ks) currents. Interacts with USP2; counteracts the NEDD4L-specific down-regulation of I(Ks) and restore plasma membrane localization. Heterotetramer with KCNQ5; has a voltage-gated potassium channel activity. Interacts with KCNE3; four KCNE3 molecules are bound to one KCNQ1 tetramer (4:4 KCNQ1:KCNE3 stoichiometry); alters membrane raft localization; affects KCNQ1 structure and gating properties. Interacts with KCNE4; impairs KCNQ1 localization in lipid rafts and inhibits voltage-gated potassium channel activity. Interacts with KCNE5; impairs KCNQ1 localization in lipid rafts and only conducts current upon strong and continued depolarization. Interacts with SLC5A3; forms coregulatory channel-transporter complexes that modulate Na(+)-coupled myo-inositol influx through the transporter. Post-translationally, phosphorylation at Ser-27 by PKA; increases delayed rectifier potassium channel activity of the KCNQ1-KCNE1 complex through a macromolecular complex that includes PKA, PP1, and the targeting protein AKAP9. Ubiquitinated by NEDD4L; promotes internalization. The ubiquitinylated form is internalized through a clathrin-mediated endocytosis by interacting with AP2M1 and is recycled back to the cell membrane via RAB4A and RAB11A. In terms of processing, deubiquitinated by USP2; counteracts the NEDD4L-specific down-regulation of I(Ks) and restores the membrane localization.

It is found in the cell membrane. The protein resides in the cytoplasmic vesicle membrane. Its subcellular location is the early endosome. The protein localises to the membrane raft. It localises to the endoplasmic reticulum. It is found in the basolateral cell membrane. The protein resides in the apical cell membrane. The enzyme catalyses K(+)(in) = K(+)(out). With respect to regulation, PIP2 molecule is essential to activate KCNQ channels by inducing the coupling of the voltage-sensing domain (VSD) and the pore-forming domain (PD). Upon channel activation, PIP2 disrupts the VSD-calmodulin/CALM interactions, causing the release of CALM from the VSD which triggers the opening of the gate. Calcium potentiates KCNQ1 channel current through calcium-bound CALM. Calcium-bound CALM competes with PIP2 to stabilize the channel open state. In terms of biological role, pore-forming subunit of the voltage-gated potassium (Kv) channel involved in the regulation of cardiomyocyte excitability and important in normal development and functions of myocardium, inner ear, stomach and colon. Associates with KCNE beta subunits that modulates current kinetics. Induces a voltage-dependent by rapidly activating and slowly deactivating potassium-selective outward current. Also promotes a delayed voltage activated potassium current showing outward rectification characteristic. During beta-adrenergic receptor stimulation participates in cardiac repolarization by associating with KCNE1 to form the I(Ks) cardiac potassium current that increases the amplitude and slows down the activation kinetics of outward potassium current I(Ks). Muscarinic agonist oxotremorine-M strongly suppresses KCNQ1/KCNE1 current. When associated with KCNE3, forms the potassium channel that is important for cyclic AMP-stimulated intestinal secretion of chloride ions. This interaction with KCNE3 is reduced by 17beta-estradiol, resulting in the reduction of currents. During conditions of increased substrate load, maintains the driving force for proximal tubular and intestinal sodium ions absorption, gastric acid secretion, and cAMP-induced jejunal chloride ions secretion. Allows the provision of potassium ions to the luminal membrane of the secretory canaliculus in the resting state as well as during stimulated acid secretion. When associated with KCNE2, forms a heterooligomer complex leading to currents with an apparently instantaneous activation, a rapid deactivation process and a linear current-voltage relationship and decreases the amplitude of the outward current. When associated with KCNE4, inhibits voltage-gated potassium channel activity. When associated with KCNE5, this complex only conducts current upon strong and continued depolarization. Also forms a heterotetramer with KCNQ5 that has a voltage-gated potassium channel activity. Binds with phosphatidylinositol 4,5-bisphosphate. KCNQ1-KCNE2 channel associates with Na(+)-coupled myo-inositol symporter in the apical membrane of choroid plexus epithelium and regulates the myo-inositol gradient between blood and cerebrospinal fluid with an impact on neuron excitability. This Oryctolagus cuniculus (Rabbit) protein is Potassium voltage-gated channel subfamily KQT member 1.